We begin with the raw amino-acid sequence, 887 residues long: Cadherin-1 (887 aa).

The first 26 residues, 1–26 (MGRRWGSPALQRFPVLVLLLLLQVCG), serve as a signal peptide directing secretion. Residues 27-160 (RRCDEAAPCQ…DPGFLRRQKR (134 aa)) constitute a propeptide that is removed on maturation. 5 Cadherin domains span residues 161 to 268 (DWVI…KPVF), 269 to 381 (IKEV…IPIF), 382 to 493 (NPTM…PPVF), 494 to 599 (VPPI…DNGP), and 600 to 704 (TPEP…RRSY). The Extracellular portion of the chain corresponds to 161-714 (DWVIPPISCL…IVGGLGVPAI (554 aa)). D263 contributes to the Ca(2+) binding site. N291 is a glycosylation site (N-linked (GlcNAc...) asparagine). Residue D294 participates in Ca(2+) binding. N346 is a glycosylation site (N-linked (GlcNAc...) asparagine). Residues N564 and N643 are each glycosylated (N-linked (GlcNAc...) asparagine). The helical transmembrane segment at 715 to 735 (LGILGGILALLILLLLLLLFA) threads the bilayer. Topologically, residues 736–887 (RRRKVEKEPL…ELYGGGEDDE (152 aa)) are cytoplasmic. A disordered region spans residues 745-770 (LLPPEDDMRDNVYNYDEEGGGEEDQD). The segment covering 759–770 (YDEEGGGEEDQD) has biased composition (acidic residues).

Homodimer. Interacts with CTNNA2. Expressed in the liver.

The protein resides in the cell junction. It is found in the adherens junction. The protein localises to the cell membrane. It localises to the endosome. Its subcellular location is the golgi apparatus. The protein resides in the trans-Golgi network. It is found in the cytoplasm. The protein localises to the desmosome. Functionally, cadherins are calcium-dependent cell adhesion proteins. They preferentially interact with themselves in a homophilic manner in connecting cells; cadherins may thus contribute to the sorting of heterogeneous cell types. Promotes organization of radial actin fiber structure and cellular response to contractile forces, via anchoring of radial actin fibers to CDH1 junction complexes at the cell membrane. E-cadherin is a ligand for integrin alpha-E/beta-7. The protein is Cadherin-1 (CDH1) of Gallus gallus (Chicken).